The following is a 241-amino-acid chain: Probable transcriptional regulatory protein Daro_4067 (241 aa).

Positions 1-22 (MAGHSKWANIQHRKGRQDEKRG) are disordered.

This sequence belongs to the TACO1 family.

Its subcellular location is the cytoplasm. In Dechloromonas aromatica (strain RCB), this protein is Probable transcriptional regulatory protein Daro_4067.